We begin with the raw amino-acid sequence, 808 residues long: DNA ligase (808 aa).

The interval 1-30 (MSISDDISPVPPAPVSEPNAGQDAGQDAAP) is disordered. The span at 18–30 (PNAGQDAGQDAAP) shows a compositional bias: low complexity. Residues 61-65 (DAEYD), 110-111 (SL), and Asp-141 contribute to the NAD(+) site. The N6-AMP-lysine intermediate role is filled by Lys-143. Arg-164, Glu-202, Lys-334, and Lys-358 together coordinate NAD(+). Positions 453, 456, 471, and 476 each coordinate Zn(2+). The 90-residue stretch at 644–733 (EGSGPLAGLR…GGDVPEDGDG (90 aa)) folds into the BRCT domain. Residues 720–808 (LEGRGGDVPE…PRKKDQHSLL (89 aa)) form a disordered region. Acidic residues predominate over residues 727 to 742 (VPEDGDGAPGNEDEAP). Positions 746 to 773 (ADVPAAPEVLADAPAAISADASSGVAPG) are enriched in low complexity. Residues 779-792 (DRADMTDRTVRTDS) are compositionally biased toward basic and acidic residues.

It belongs to the NAD-dependent DNA ligase family. LigA subfamily. Mg(2+) is required as a cofactor. Requires Mn(2+) as cofactor.

It carries out the reaction NAD(+) + (deoxyribonucleotide)n-3'-hydroxyl + 5'-phospho-(deoxyribonucleotide)m = (deoxyribonucleotide)n+m + AMP + beta-nicotinamide D-nucleotide.. DNA ligase that catalyzes the formation of phosphodiester linkages between 5'-phosphoryl and 3'-hydroxyl groups in double-stranded DNA using NAD as a coenzyme and as the energy source for the reaction. It is essential for DNA replication and repair of damaged DNA. The protein is DNA ligase of Nitratidesulfovibrio vulgaris (strain DSM 19637 / Miyazaki F) (Desulfovibrio vulgaris).